Reading from the N-terminus, the 548-residue chain is Chaperonin GroEL (548 aa).

Residues 30 to 33 (TLGP), K51, 87 to 91 (DGTTT), G415, and D495 contribute to the ATP site.

This sequence belongs to the chaperonin (HSP60) family. In terms of assembly, forms a cylinder of 14 subunits composed of two heptameric rings stacked back-to-back. Interacts with the co-chaperonin GroES.

It localises to the cytoplasm. The catalysed reaction is ATP + H2O + a folded polypeptide = ADP + phosphate + an unfolded polypeptide.. Functionally, together with its co-chaperonin GroES, plays an essential role in assisting protein folding. The GroEL-GroES system forms a nano-cage that allows encapsulation of the non-native substrate proteins and provides a physical environment optimized to promote and accelerate protein folding. This chain is Chaperonin GroEL, found in Photorhabdus laumondii subsp. laumondii (strain DSM 15139 / CIP 105565 / TT01) (Photorhabdus luminescens subsp. laumondii).